Reading from the N-terminus, the 45-residue chain is uncharacterized protein (45 aa).

This sequence belongs to the asfivirus C62L family.

This is an uncharacterized protein from Ornithodoros (relapsing fever ticks).